The primary structure comprises 303 residues: GTPase Era (303 aa).

The 170-residue stretch at 7 to 176 (KSGFVAIIGR…LDNVVSHLDE (170 aa)) folds into the Era-type G domain. Positions 15–22 (GRPNVGKS) are G1. 15–22 (GRPNVGKS) is a binding site for GTP. Positions 41–45 (QTTRN) are G2. The interval 62 to 65 (DTPG) is G3. Residues 62–66 (DTPGV) and 125–128 (NKVD) each bind GTP. The interval 125 to 128 (NKVD) is G4. A G5 region spans residues 155-157 (ISA). A KH type-2 domain is found at 207 to 284 (TRQEVPHSVA…FLETWVKVEP (78 aa)).

It belongs to the TRAFAC class TrmE-Era-EngA-EngB-Septin-like GTPase superfamily. Era GTPase family. As to quaternary structure, monomer.

The protein resides in the cytoplasm. It localises to the cell membrane. Its function is as follows. An essential GTPase that binds both GDP and GTP, with rapid nucleotide exchange. Plays a role in 16S rRNA processing and 30S ribosomal subunit biogenesis and possibly also in cell cycle regulation and energy metabolism. The sequence is that of GTPase Era from Leuconostoc citreum (strain KM20).